The following is a 310-amino-acid chain: 2-methoxy-6-polyprenyl-1,4-benzoquinol methylase, mitochondrial (310 aa).

The N-terminal 6 residues, Met-1–Ser-6, are a transit peptide targeting the mitochondrion. S-adenosyl-L-methionine contacts are provided by residues Thr-99, Asp-154, and Asp-182–Ala-183.

It belongs to the class I-like SAM-binding methyltransferase superfamily. MenG/UbiE family. Component of a multi-subunit COQ enzyme complex, composed of at least coq3, coq4, coq5, coq6, coq7 and coq9.

It is found in the mitochondrion inner membrane. The enzyme catalyses a 2-methoxy-6-(all-trans-polyprenyl)benzene-1,4-diol + S-adenosyl-L-methionine = a 5-methoxy-2-methyl-3-(all-trans-polyprenyl)benzene-1,4-diol + S-adenosyl-L-homocysteine + H(+). Its pathway is cofactor biosynthesis; ubiquinone biosynthesis. Methyltransferase required for the conversion of 2-polyprenyl-6-methoxy-1,4-benzoquinol (DDMQH2) to 2-polyprenyl-3-methyl-6-methoxy-1,4-benzoquinol (DMQH2). This Xenopus laevis (African clawed frog) protein is 2-methoxy-6-polyprenyl-1,4-benzoquinol methylase, mitochondrial.